The following is a 223-amino-acid chain: Neurotrophic factor BDNF precursor form (223 aa).

Positions 1–5 (SCMKA) are cleaved as a signal peptide. Positions 6–114 (APMKEVSIRG…AANMSMRVRR (109 aa)) are excised as a propeptide. Asn-107 is a glycosylation site (N-linked (GlcNAc...) asparagine). 2 disulfide bridges follow: Cys-127–Cys-194 and Cys-172–Cys-223.

Belongs to the NGF-beta family.

It is found in the secreted. Its function is as follows. Promotes the survival of neuronal populations that are all located either in the central nervous system or directly connected to it. This chain is Neurotrophic factor BDNF precursor form (BDNF), found in Candoia carinata (Papuan tree boa).